A 1745-amino-acid polypeptide reads, in one-letter code: Collagen alpha-3(V) chain (1745 aa).

Residues 1–29 form the signal peptide; sequence MGNRRDLGQPRAGLCLLLAALQLLPGTQA. The 163-residue stretch at 62–224 folds into the Laminin G-like domain; that stretch reads DRAFRIGQAS…QACERYLPDC (163 aa). 2 N-linked (GlcNAc...) asparagine glycosylation sites follow: asparagine 102 and asparagine 141. The interval 211 to 391 is nonhelical region; sequence QAAFQACERY…AVIEKGQQFE (181 aa). 4 disordered regions span residues 230–304, 322–362, 387–439, and 476–1492; these read AATV…TPTP, RSLD…EYPS, GQQF…RGPP, and SMKG…PAEL. A compositionally biased stretch (basic residues) spans 244 to 267; it reads PRRKGKGKGRKKGRGRKGKGRKKN. O-linked (Xyl...) (chondroitin sulfate) serine glycosylation is present at serine 349. Collagen-like domains are found at residues 391-440 and 482-538; these read EGPP…GPPG and GPVG…DGAR. Positions 392–1489 are triple-helical region; the sequence is GPPGAPGPQG…AGPPGPPGAP (1098 aa). Residues 406–424 are compositionally biased toward pro residues; sequence SGPPGPPGFPGDPGPPGPA. 3 stretches are compositionally biased toward low complexity: residues 426–439, 489–499, and 597–619; these read LPGI…RGPP, RPGPVGLPGHP, and EPGP…PGVT. Positions 724 to 733 are enriched in basic and acidic residues; sequence QGEKGEKGED. Residues 765–792 are compositionally biased toward low complexity; it reads PKGQAGQAGEEGPPGSAGEKGKLGVPGL. 3 consecutive Collagen-like domains span residues 824–877, 905–950, and 951–989; these read GQPG…QGPP, GFQG…GLPG, and LEGR…GDPG. The span at 967–979 shows a compositional bias: low complexity; the sequence is LGKEGPAGLRGFP. The span at 1016–1025 shows a compositional bias: gly residues; the sequence is GPAGGIGLPG. 2 stretches are compositionally biased toward low complexity: residues 1116 to 1126 and 1141 to 1152; these read ADGAQGRRGPP and VGVIGPPGLQGL. Over residues 1190-1199 the composition is skewed to gly residues; the sequence is GLPGGVGQPG. The span at 1213–1222 shows a compositional bias: pro residues; it reads PGPPGAPGIP. A compositionally biased stretch (low complexity) spans 1234-1243; the sequence is SGPSGAAGPP. Residues 1318–1330 show a composition bias toward basic and acidic residues; it reads MGREGREGEKGAK. Low complexity predominate over residues 1405–1416; that stretch reads IGLIGLIGPPGE. Positions 1429 to 1443 are enriched in pro residues; that stretch reads QGPPGPKGDPGPPGP. In terms of domain architecture, Collagen-like 6 spans 1430-1488; that stretch reads GPPGPKGDPGPPGPIGSLGHPGPPGVAGPLGQKGSKGSPGSMGPRGDTGPAGPPGPPGA. The segment covering 1458 to 1479 has biased composition (low complexity); that stretch reads PLGQKGSKGSPGSMGPRGDTGP. The Fibrillar collagen NC1 domain occupies 1514-1744; that stretch reads EEVLASLTSL…GFELGPVCFS (231 aa). Intrachain disulfides connect cysteine 1585/cysteine 1742 and cysteine 1651/cysteine 1696.

It belongs to the fibrillar collagen family. As to quaternary structure, trimers of two alpha 1(V) and one alpha 2(V) chains in most tissues and trimers of one alpha 1(V), one alpha 2(V), and one alpha 3(V) chains in placenta. Post-translationally, prolines at the third position of the tripeptide repeating unit (G-X-Y) are hydroxylated in some or all of the chains. As to expression, detected in fibroblasts (at protein level). Detected in urine (at protein level).

It is found in the secreted. The protein resides in the extracellular space. The protein localises to the extracellular matrix. Its function is as follows. Type V collagen is a member of group I collagen (fibrillar forming collagen). It is a minor connective tissue component of nearly ubiquitous distribution. Type V collagen binds to DNA, heparan sulfate, thrombospondin, heparin, and insulin. The protein is Collagen alpha-3(V) chain (COL5A3) of Homo sapiens (Human).